The following is a 571-amino-acid chain: Zinc metalloproteinase nas-15 (571 aa).

The N-terminal stretch at 1–15 is a signal peptide; that stretch reads MREYVLIFLVAPVFA. Asparagine 92 is a glycosylation site (N-linked (GlcNAc...) asparagine). The region spanning 114 to 307 is the Peptidase M12A domain; sequence NAIKNRLQLW…FKINTLYGCP (194 aa). 5 disulfide bridges follow: cysteine 156–cysteine 306, cysteine 178–cysteine 197, cysteine 354–cysteine 388, cysteine 361–cysteine 381, and cysteine 370–cysteine 385. Histidine 205 contributes to the Zn(2+) binding site. Glutamate 206 is a catalytic residue. Zn(2+) is bound by residues histidine 209 and histidine 215. One can recognise a ShKT 1 domain in the interval 354–388; it reads CRNLRGDCDDLAKQGWCIRNPGWMRANCPISCGMC. Residues 407-420 show a composition bias toward low complexity; that stretch reads TTTARPQKPVTQPI. The segment at 407 to 426 is disordered; the sequence is TTTARPQKPVTQPIQPLPPV. 3 disulfide bridges follow: cysteine 437–cysteine 471, cysteine 444–cysteine 464, and cysteine 453–cysteine 468. Residues 437-471 enclose the ShKT 2 domain; that stretch reads CEDLRVDCLVLVSQRYCKISQNFMKSYCAKSCGFC. Positions 500–530 are disordered; it reads IRSRSPAPPVSTTTKAAPTTSTTSAAPYSPT. The span at 509 to 527 shows a compositional bias: low complexity; that stretch reads VSTTTKAAPTTSTTSAAPY. 3 cysteine pairs are disulfide-bonded: cysteine 536-cysteine 571, cysteine 543-cysteine 564, and cysteine 552-cysteine 568. Residues 536-571 enclose the ShKT 3 domain; it reads CSDRKHFCSHWKSAGFCEGIFMNYMKKNCPASCGLC.

Requires Zn(2+) as cofactor. As to expression, expressed in pharyngeal marginal cells and muscles.

It is found in the secreted. Its function is as follows. Metalloprotease. The chain is Zinc metalloproteinase nas-15 (nas-15) from Caenorhabditis elegans.